Consider the following 63-residue polypeptide: MIVDNLKNLILSKNSNQGVTPNASIGFRSNKYGSNIVCESDSIQIKATPTITFTYTKPGYNKT.

This is an uncharacterized protein from Dictyostelium discoideum (Social amoeba).